The sequence spans 460 residues: Multidrug resistance protein NorM (460 aa).

12 consecutive transmembrane segments (helical) span residues 18–38 (VLIASVAQTGMGFVDTVMAGG), 53–73 (VWLPSVLFGVGLLMALVPVVA), 94–114 (LALLTSIPIMLVLYNAGFIIA), 126–146 (TQGYLHAVLWAAPAFLLFQTL), 159–179 (AMIIGFIGLAANVPLNWMFVY), 185–205 (PALGGVGCGVATAIVYWLMFL), 242–262 (LPVALSIFFEVTLFAAVALLV), 276–296 (AINFSSLIFMIPMSIAVAVSI), 315–335 (YCGLAFGLLMACCTAILTLIF), 349–369 (VITLAVSLMLLAAIYQCTDAV), 391–411 (FVSYWIVGLPSGYVLGMTDWI), and 415–435 (MGVYGFWFGFIGGLTTSAILL).

It belongs to the multi antimicrobial extrusion (MATE) (TC 2.A.66.1) family.

The protein resides in the cell inner membrane. Multidrug efflux pump that functions as a Na(+)/drug antiporter. In Aliivibrio fischeri (strain ATCC 700601 / ES114) (Vibrio fischeri), this protein is Multidrug resistance protein NorM (norM).